We begin with the raw amino-acid sequence, 277 residues long: Elongation factor 1-delta (277 aa).

An N-acetylalanine modification is found at Ala2. N6-acetyllysine is present on Lys17. Phosphoserine occurs at positions 37, 44, 60, 86, and 106. Lys107 is modified (N6-acetyllysine). Residues Ser113–Ala171 form a disordered region. Residue Lys117 is modified to N6-acetyllysine; alternate. N6-succinyllysine; alternate is present on Lys117. Ser119 carries the post-translational modification Phosphoserine. At Thr129 the chain carries Phosphothreonine. Ser133 carries the post-translational modification Phosphoserine. Thr147 bears the Phosphothreonine mark. Residues Thr149–Lys168 show a composition bias toward acidic residues. The residue at position 162 (Ser162) is a Phosphoserine; by CK2.

This sequence belongs to the EF-1-beta/EF-1-delta family. EF-1 is composed of 4 subunits: alpha, beta, delta, and gamma.

Functionally, EF-1-beta and EF-1-delta stimulate the exchange of GDP bound to EF-1-alpha to GTP. This Ovis aries (Sheep) protein is Elongation factor 1-delta (EEF1D).